The primary structure comprises 66 residues: MFTLKKPLLLLFFLGTVSLSLCEQERAADDDEGEVIEEEVKRDSMGAVKLAKLLIDKMKCEVTKAC.

The signal sequence occupies residues 1–22; the sequence is MFTLKKPLLLLFFLGTVSLSLC. Positions 23-40 are excised as a propeptide; the sequence is EQERAADDDEGEVIEEEV. The cysteines at positions 60 and 66 are disulfide-linked.

Expressed by the skin glands.

The protein localises to the secreted. In terms of biological role, displays broad-spectrum antibacterial activity against a range of Gram-positive and Gram-negative bacteria. Also displays antifungal activity against C.albicans ATCC 2002. Has low hemolytic activity, low cytotoxicity and low antioxidant activity. This is Jindongenin-1a from Amolops jingdongensis (Chinese torrent frog).